A 229-amino-acid chain; its full sequence is ATP synthase subunit a (229 aa).

The next 6 membrane-spanning stretches (helical) occupy residues 25 to 45, 82 to 102, 104 to 124, 142 to 162, 181 to 201, and 202 to 222; these read ADAI…SMLA, FFPL…IGLV, GFFP…IVFV, FLGP…IGHF, LVLM…MMLM, and GVLV…IYIQ.

This sequence belongs to the ATPase A chain family. F-type ATPases have 2 components, CF(1) - the catalytic core - and CF(0) - the membrane proton channel. CF(1) has five subunits: alpha(3), beta(3), gamma(1), delta(1), epsilon(1). CF(0) has three main subunits: a(1), b(2) and c(9-12). The alpha and beta chains form an alternating ring which encloses part of the gamma chain. CF(1) is attached to CF(0) by a central stalk formed by the gamma and epsilon chains, while a peripheral stalk is formed by the delta and b chains.

Its subcellular location is the cell inner membrane. In terms of biological role, key component of the proton channel; it plays a direct role in the translocation of protons across the membrane. This chain is ATP synthase subunit a, found in Geotalea uraniireducens (strain Rf4) (Geobacter uraniireducens).